We begin with the raw amino-acid sequence, 489 residues long: Aspartate/glutamate permease AcaP (489 aa).

The next 12 helical transmembrane spans lie at 6–26 (IRWF…GNVV), 36–56 (VVTS…LIVG), 91–111 (VVHI…FGWV), 122–142 (MSMT…LWLS), 152–172 (IGGL…VMAI), 195–215 (IPKF…AVGG), 238–258 (FLLA…MGMI), 290–310 (LMIV…AFSI), 342–362 (GYTL…LGIG), 373–393 (NLNS…FIML), 413–433 (AMIA…LGMV), and 449–469 (LASN…LPFI).

This sequence belongs to the amino acid-polyamine-organocation (APC) superfamily. Glutamate:GABA antiporter (GGA) (TC 2.A.3.7) family.

The protein localises to the cell membrane. Involved in aspartate and glutamate uptake. Plays no significant role in the excretion of accumulated glutamate. In Lactococcus lactis subsp. cremoris (strain MG1363), this protein is Aspartate/glutamate permease AcaP.